The primary structure comprises 170 residues: Adenine phosphoribosyltransferase (170 aa).

The protein belongs to the purine/pyrimidine phosphoribosyltransferase family. In terms of assembly, homodimer.

It localises to the cytoplasm. It carries out the reaction AMP + diphosphate = 5-phospho-alpha-D-ribose 1-diphosphate + adenine. The protein operates within purine metabolism; AMP biosynthesis via salvage pathway; AMP from adenine: step 1/1. Functionally, catalyzes a salvage reaction resulting in the formation of AMP, that is energically less costly than de novo synthesis. In Streptococcus suis (strain 98HAH33), this protein is Adenine phosphoribosyltransferase.